The following is a 406-amino-acid chain: Arginine deiminase (406 aa).

Catalysis depends on C396, which acts as the Amidino-cysteine intermediate.

Belongs to the arginine deiminase family.

The protein localises to the cytoplasm. It catalyses the reaction L-arginine + H2O = L-citrulline + NH4(+). It participates in amino-acid degradation; L-arginine degradation via ADI pathway; carbamoyl phosphate from L-arginine: step 1/2. This is Arginine deiminase from Aliivibrio salmonicida (strain LFI1238) (Vibrio salmonicida (strain LFI1238)).